A 302-amino-acid chain; its full sequence is Vacuolar protein sorting-associated protein 26A (302 aa).

Belongs to the VPS26 family. In terms of assembly, component of the retromer complex which consists of VPS29 (MAG1), VPS26 (VPS26A or VPS26B), VPS35 (VPS35A or VPS35B or VPS35C), VPS5/17 (SNX1 or SNX2A or SNX2B). Component of a retromer subcomplex consisting of VPS29 (MAG1), VPS26 (VPS26A or VPS26B), VPS35 (VPS35A or VPS35B or VPS35C).

The protein resides in the cytoplasm. It is found in the endosome membrane. It localises to the prevacuolar compartment membrane. Its subcellular location is the golgi apparatus. The protein localises to the trans-Golgi network membrane. Functionally, plays a role in vesicular protein sorting. Component of the membrane-associated retromer complex which is essential in endosome-to-Golgi retrograde transport. The VPS29-VPS26-VPS35 subcomplex may be involved in recycling of specific cargos from endosome to the plasma membrane. The chain is Vacuolar protein sorting-associated protein 26A (VPS26A) from Arabidopsis thaliana (Mouse-ear cress).